We begin with the raw amino-acid sequence, 470 residues long: Transcription factor SOX-8 (470 aa).

The span at 1-12 shows a compositional bias: basic and acidic residues; sequence MLNMTEEHDKAL. The segment at 1–60 is disordered; sequence MLNMTEEHDKALEAPCSPAGTTSSMSHVDSDSDSPLSPAGSEGLGCAPAPAPRPPGAAPL. The tract at residues 67-107 is dimerization (DIM); the sequence is AEVDERFPACIRDAVSQVLKGYDWSLVPMPVRGNGSLKAKP. Positions 109 to 177 form a DNA-binding region, HMG box; the sequence is VKRPMNAFMV…QHKKDHPDYK (69 aa). Composition is skewed to basic and acidic residues over residues 163–178, 219–228, and 242–257; these read ERLRVQHKKDHPDYKY, DGHHHGEHAG, and TDLHHGSKQELKHEGR. Disordered regions lie at residues 163 to 257 and 327 to 381; these read ERLR…HEGR and AGGA…DYGS. A transactivation domain (TAM) region spans residues 233–308; the sequence is PPTPPTTPKT…LNGHTAMPAD (76 aa). Positions 338–349 are enriched in low complexity; that stretch reads SPASASPSSADS. Residues 353 to 470 form a transactivation domain (TAC) region; that stretch reads RPHIKTEQLS…QPVYTTLTRP (118 aa). Positions 359 to 372 are enriched in polar residues; the sequence is EQLSPSHYSDQSHG. The short motif at 424–432 is the 9aaTAD element; the sequence is SSIYQYPYF.

As to expression, widely expressed in the embryo.

Its subcellular location is the nucleus. In terms of biological role, transcription factor that may play a role in central nervous system, limb and facial development. May be involved in male sex determination. Binds the consensus motif 5'-[AT][AT]CAA[AT]G-3'. In Gallus gallus (Chicken), this protein is Transcription factor SOX-8 (SOX8).